Reading from the N-terminus, the 900-residue chain is Alanine--tRNA ligase (900 aa).

Zn(2+)-binding residues include His587, His591, Cys691, and His695.

This sequence belongs to the class-II aminoacyl-tRNA synthetase family. The cofactor is Zn(2+).

The protein resides in the cytoplasm. It carries out the reaction tRNA(Ala) + L-alanine + ATP = L-alanyl-tRNA(Ala) + AMP + diphosphate. Functionally, catalyzes the attachment of alanine to tRNA(Ala) in a two-step reaction: alanine is first activated by ATP to form Ala-AMP and then transferred to the acceptor end of tRNA(Ala). Also edits incorrectly charged Ser-tRNA(Ala) and Gly-tRNA(Ala) via its editing domain. The sequence is that of Alanine--tRNA ligase from Aeropyrum pernix (strain ATCC 700893 / DSM 11879 / JCM 9820 / NBRC 100138 / K1).